Reading from the N-terminus, the 151-residue chain is Ubiquitin-conjugating enzyme E2 2 (151 aa).

Positions 1–26 are disordered; sequence MSTSARRRLMRDFKRMQTDPPAGVSA. In terms of domain architecture, UBC core spans 4–150; sequence SARRRLMRDF…VRETVEKSWE (147 aa). Cys88 functions as the Glycyl thioester intermediate in the catalytic mechanism.

The protein belongs to the ubiquitin-conjugating enzyme family.

The protein localises to the cytoplasm. It is found in the nucleus. The catalysed reaction is S-ubiquitinyl-[E1 ubiquitin-activating enzyme]-L-cysteine + [E2 ubiquitin-conjugating enzyme]-L-cysteine = [E1 ubiquitin-activating enzyme]-L-cysteine + S-ubiquitinyl-[E2 ubiquitin-conjugating enzyme]-L-cysteine.. It functions in the pathway protein modification; protein ubiquitination. Catalyzes the covalent attachment of ubiquitin to other proteins. Plays a role in transcription regulation by catalyzing the monoubiquitination of histone H2B to form H2BK123ub1. H2BK123ub1 gives a specific tag for epigenetic transcriptional activation and is also a prerequisite for H3K4me and H3K79me formation. Also involved in postreplication repair of UV-damaged DNA, in N-end rule-dependent protein degradation and in sporulation. The polypeptide is Ubiquitin-conjugating enzyme E2 2 (ubc2) (Aspergillus fumigatus (strain ATCC MYA-4609 / CBS 101355 / FGSC A1100 / Af293) (Neosartorya fumigata)).